The sequence spans 223 residues: ATP-dependent dethiobiotin synthetase BioD (223 aa).

Thr16 is a Mg(2+) binding site. Lys37 is a catalytic residue. A substrate-binding site is contributed by Ser41. Mg(2+) contacts are provided by Asp50 and Glu111. Residues Asp50, 111–114 (EGAG), and 171–172 (NR) contribute to the ATP site.

It belongs to the dethiobiotin synthetase family. Homodimer. Mg(2+) is required as a cofactor.

The protein localises to the cytoplasm. The enzyme catalyses (7R,8S)-7,8-diammoniononanoate + CO2 + ATP = (4R,5S)-dethiobiotin + ADP + phosphate + 3 H(+). The protein operates within cofactor biosynthesis; biotin biosynthesis; biotin from 7,8-diaminononanoate: step 1/2. In terms of biological role, catalyzes a mechanistically unusual reaction, the ATP-dependent insertion of CO2 between the N7 and N8 nitrogen atoms of 7,8-diaminopelargonic acid (DAPA, also called 7,8-diammoniononanoate) to form a ureido ring. This Anaeromyxobacter dehalogenans (strain 2CP-C) protein is ATP-dependent dethiobiotin synthetase BioD.